The following is a 403-amino-acid chain: MSVHIEESPTTDGDVITNYTINFGPQHPAAHGVLRMIMELDGEIIERVDPHVGLLHRGTEKLIEHKTYLQALPYFDRLDYCSPLCMEHSYVLAIEKLLNIEVPERAQYLRVLFAELTRISNHMLNLGAHVLDVGAFTPNLWMFELREDCMNFFERASGARMHMAWFRPGGVHQDVPEKLLVDIGEWLDTRLPELFGDAMSLVLDNRIFKQRNVDIAVVSKDDAVKWGFSGPMIRAAGIPWDLRKSQPYDVYDRMEFDIPVGTNSDCYDRFSVRVKEVYESAKIIKQCLAQMPQGPIASTDGKVSPPSRGRMKQSMEALIHHFKLYTEGFHVPAGEVYVATESPKGEFGVYLVADGTNKPYRCKIRPTAFSHLQAMDFMSKGHMLPDATAILGAIDVVFGECDR.

Belongs to the complex I 49 kDa subunit family. NDH-1 is composed of 14 different subunits. Subunits NuoB, C, D, E, F, and G constitute the peripheral sector of the complex.

It is found in the cell inner membrane. It carries out the reaction a quinone + NADH + 5 H(+)(in) = a quinol + NAD(+) + 4 H(+)(out). In terms of biological role, NDH-1 shuttles electrons from NADH, via FMN and iron-sulfur (Fe-S) centers, to quinones in the respiratory chain. The immediate electron acceptor for the enzyme in this species is believed to be ubiquinone. Couples the redox reaction to proton translocation (for every two electrons transferred, four hydrogen ions are translocated across the cytoplasmic membrane), and thus conserves the redox energy in a proton gradient. This is NADH-quinone oxidoreductase subunit D from Erythrobacter litoralis (strain HTCC2594).